The chain runs to 296 residues: Ribonuclease MRP protein subunit POP4 (296 aa).

Disordered regions lie at residues 29-74 and 148-173; these read LLQQ…VDPK and SASG…KRLK. The segment covering 36–56 has biased composition (basic and acidic residues); that stretch reads KNEKDKKGTSDVDVSMKESHQ. Positions 57–66 are enriched in polar residues; that stretch reads ADSLPTPSKT. The short motif at 160–167 is the Nuclear localization signal element; it reads SKRSKSRM. Basic residues predominate over residues 163 to 173; that stretch reads SKSRMSMKRLK.

It belongs to the eukaryotic/archaeal RNase P protein component 1 family. As to quaternary structure, component of nuclear RNase MRP complexes. Several subunits of RNase P are also part of the RNase MRP complex. RNase MRP consists of a catalytic RNA moiety and several protein subunits.

Its subcellular location is the nucleus. Component of the MRP ribonuclease complex, which cleaves pre-rRNA sequences. Required for rRNA maturation, including 5.8S rRNA processing. Seems not involved in tRNA maturation. This is Ribonuclease MRP protein subunit POP4 from Arabidopsis thaliana (Mouse-ear cress).